The sequence spans 201 residues: Recombination protein RecR (201 aa).

The segment at 60-75 (CKKCFNLTSEDECEIC) adopts a C4-type zinc-finger fold. In terms of domain architecture, Toprim spans 83–177 (KLICVVAETK…KVTRIAYGLP (95 aa)).

Belongs to the RecR family.

In terms of biological role, may play a role in DNA repair. It seems to be involved in an RecBC-independent recombinational process of DNA repair. It may act with RecF and RecO. The protein is Recombination protein RecR of Prochlorococcus marinus (strain MIT 9215).